The chain runs to 886 residues: Alanine--tRNA ligase (886 aa).

Residues histidine 564, histidine 568, cysteine 666, and histidine 670 each contribute to the Zn(2+) site.

The protein belongs to the class-II aminoacyl-tRNA synthetase family. Requires Zn(2+) as cofactor.

The protein resides in the cytoplasm. It carries out the reaction tRNA(Ala) + L-alanine + ATP = L-alanyl-tRNA(Ala) + AMP + diphosphate. Catalyzes the attachment of alanine to tRNA(Ala) in a two-step reaction: alanine is first activated by ATP to form Ala-AMP and then transferred to the acceptor end of tRNA(Ala). Also edits incorrectly charged Ser-tRNA(Ala) and Gly-tRNA(Ala) via its editing domain. The polypeptide is Alanine--tRNA ligase (Prochlorococcus marinus (strain MIT 9312)).